A 158-amino-acid polypeptide reads, in one-letter code: Probable host range protein 2-1 (158 aa).

It belongs to the poxviridae C7 protein family.

Functionally, plays a role for multiplication of the virus in different cell types. The polypeptide is Probable host range protein 2-1 (Oryctolagus cuniculus (Rabbit)).